A 431-amino-acid chain; its full sequence is Trigger factor (431 aa).

The PPIase FKBP-type domain maps to 163 to 248; sequence GHFAVIDFTG…LSEIKVKELP (86 aa).

It belongs to the FKBP-type PPIase family. Tig subfamily.

The protein resides in the cytoplasm. It carries out the reaction [protein]-peptidylproline (omega=180) = [protein]-peptidylproline (omega=0). Its function is as follows. Involved in protein export. Acts as a chaperone by maintaining the newly synthesized protein in an open conformation. Functions as a peptidyl-prolyl cis-trans isomerase. The protein is Trigger factor of Geobacter sulfurreducens (strain ATCC 51573 / DSM 12127 / PCA).